Consider the following 83-residue polypeptide: Small ribosomal subunit protein bS16 (83 aa).

It belongs to the bacterial ribosomal protein bS16 family.

This Pseudomonas entomophila (strain L48) protein is Small ribosomal subunit protein bS16.